An 868-amino-acid chain; its full sequence is Thiol protease/hemagglutinin PrtT (868 aa).

Residues methionine 1–lysine 27 form the signal peptide. Catalysis depends on residues cysteine 184 and histidine 327.

This sequence belongs to the peptidase C10 family.

Appears to be specific for arginine-containing peptide bonds. Possesses hemagglutinin activity. The sequence is that of Thiol protease/hemagglutinin PrtT (prtT) from Porphyromonas gingivalis (Bacteroides gingivalis).